Reading from the N-terminus, the 303-residue chain is Glutaminase (303 aa).

The substrate site is built by serine 61, asparagine 111, glutamate 155, asparagine 162, tyrosine 186, tyrosine 238, and valine 256.

It belongs to the glutaminase family. Homotetramer.

It catalyses the reaction L-glutamine + H2O = L-glutamate + NH4(+). The chain is Glutaminase from Marinomonas sp. (strain MWYL1).